We begin with the raw amino-acid sequence, 665 residues long: Sodium-dependent phosphate transporter 1-B (665 aa).

The next 6 helical transmembrane spans lie at 26–46 (YMWLLIVGFIIAFVLAFSVGA), 67–87 (ACILASIFETLGSVLLGAKVS), 107–127 (LMAGSVSAMFGSAVWQLAASF), 163–183 (IVASWFLSPLLSGVMSAVLFY), 202–222 (ALPFFYAVTMGINLFSIMFTG), and 235–255 (GVLLISIGFGIITALIVWFAV). Disordered stretches follow at residues 294–345 (VPEE…APKT) and 423–442 (ESEFRASEDGDKEKAGAQER). The span at 296–306 (EESSVLSSSTP) shows a compositional bias: low complexity. Positions 329–338 (ADQKDCKESD) are enriched in basic and acidic residues. A run of 4 helical transmembrane segments spans residues 499-519 (VSMLFQFLQILTACFGSFAHG), 548-568 (TPIWLLLYGGVGICVGLWVWG), 588-608 (FSIELASAVTVVVASNIGLPV), and 638-658 (IFMAWFVTVPISGLISAAIMA).

The protein belongs to the inorganic phosphate transporter (PiT) (TC 2.A.20) family.

The protein localises to the membrane. Functionally, sodium-phosphate symporter which plays a fundamental housekeeping role in phosphate transport. The sequence is that of Sodium-dependent phosphate transporter 1-B (slc20a1b) from Danio rerio (Zebrafish).